The primary structure comprises 148 residues: Large ribosomal subunit protein uL13 (148 aa).

2 stretches are compositionally biased toward basic and acidic residues: residues 71–81 (GKKEKQKEYHE) and 89–99 (DHSHSPEEMRA). Disordered regions lie at residues 71-99 (GKKEKQKEYHEYSGYPGGDHSHSPEEMRA) and 125-148 (KKLKVYAGPDHPHEAQQPEPLDNA).

This sequence belongs to the universal ribosomal protein uL13 family. As to quaternary structure, part of the 50S ribosomal subunit.

Its function is as follows. This protein is one of the early assembly proteins of the 50S ribosomal subunit, although it is not seen to bind rRNA by itself. It is important during the early stages of 50S assembly. The sequence is that of Large ribosomal subunit protein uL13 from Salinibacter ruber (strain DSM 13855 / M31).